The chain runs to 172 residues: Peptide deformylase-like (172 aa).

Residue E134 is part of the active site.

The protein belongs to the polypeptide deformylase family.

This is Peptide deformylase-like from Rhizobium meliloti (strain 1021) (Ensifer meliloti).